Reading from the N-terminus, the 555-residue chain is MAAAGAAATHLEVARGKRAALFFAAVAIVLGLPLWWKTTETYRASLPYSQISGLNALQLRLMVPVTVVFTRESVPLDDQEKLPFTVVHEREIPLKYKMKIKCRFQKAYRRALDHEEEALSSGSVQEAEAMLDEPQEQAEGSLTVYVISEHSSLLPQDMMSYIGPKRTAVVRGIMHREAFNIIGRRIVQVAQAMSLTEDVLAAALADHLPEDKWSAEKRRPLKSSLGYEITFSLLNPDPKSHDVYWDIEGAVRRYVQPFLNALGAAGNFSVDSQILYYAMLGVNPRFDSASSSYYLDMHSLPHVINPVESRLGSSAASLYPVLNFLLYVPELAHSPLYIQDKDGAPVATNAFHSPRWGGIMVYNVDSKTYNASVLPVRVEVDMVRVMEVFLAQLRLLFGIAQPQLPPKCLLSGPTSEGLMTWELDRLLWARSVENLATATTTLTSLAQLLGKISNIVIKDDVASEVYKAVAAVQKSAEELASGHLASAFVASQEAVTSSELAFFDPSLLHLLYFPDDQKFAIYIPLFLPMAVPILLSLVKIFLETRKSWRKPEKTD.

Over alanine 2 to arginine 18 the chain is Cytoplasmic. 2 residues coordinate a cardiolipin: arginine 15 and arginine 18. A helical membrane pass occupies residues alanine 19–threonine 39. The Lumenal portion of the chain corresponds to glutamate 40–glutamine 517. N-linked (GlcNAc...) asparagine glycans are attached at residues asparagine 267 and asparagine 370. Residues lysine 518–proline 532 traverse the membrane as a helical segment. At isoleucine 533–aspartate 555 the chain is on the cytoplasmic side.

The protein belongs to the PIGS family. In terms of assembly, heteropentamer. Part of the GPI-anchor transamidase complex, consisting of PIGK, PIGT, PIGS, PIGU and GAA1.

It localises to the endoplasmic reticulum membrane. Its pathway is glycolipid biosynthesis; glycosylphosphatidylinositol-anchor biosynthesis. In terms of biological role, component of the glycosylphosphatidylinositol-anchor (GPI-anchor) transamidase (GPI-T) complex that catalyzes the formation of the linkage between a proprotein and a GPI-anchor and participates in GPI anchored protein biosynthesis. The sequence is that of GPI-anchor transamidase component PIGS from Homo sapiens (Human).